A 203-amino-acid chain; its full sequence is Monothiol glutaredoxin-7 (203 aa).

The signal sequence occupies residues methionine 1–alanine 32. One can recognise a Glutaredoxin domain in the interval alanine 88–alanine 191. Cysteine 108 serves as a coordination point for [2Fe-2S] cluster.

This sequence belongs to the glutaredoxin family. Monothiol subfamily.

This Saccharomyces cerevisiae (strain ATCC 204508 / S288c) (Baker's yeast) protein is Monothiol glutaredoxin-7 (GRX7).